Reading from the N-terminus, the 1456-residue chain is CLIP-associating protein 1-B (1456 aa).

HEAT repeat units follow at residues 68-87, 88-124, and 163-200; these read LLGMDILSALVTRLQDRFRT, QIGTVLPSLMDRLGDAKDSVRDQDQNLLIKIMEQASN, and LTLSKIVPHICNLLGDPNSQVRDAAINCLVEIYRHVGE. Positions 237-296 are disordered; the sequence is TDKNFDDEDSVDGNRPSSASSSASSKAPQTARRGVSLGTGRRPGTSSAAPKTGGTAKEGA. The span at 284–296 shows a compositional bias: low complexity; that stretch reads AAPKTGGTAKEGA. An HEAT 4 repeat occupies 442–479; that stretch reads THVPRLIPIITSNCTSKSVAVRRRCYEFLDLLLQEWQT. 2 disordered regions span residues 547-728 and 776-796; these read SIVS…DRFG and GMYSDDDANSDASSACSERSY. Low complexity predominate over residues 550–569; sequence SLPQSDRSSSSSQESLNRPL. Residues 573 to 594 are compositionally biased toward polar residues; that stretch reads RSPTGSTVSRATSKSTTGSLQR. 3 stretches are compositionally biased toward low complexity: residues 603–618, 642–656, and 665–679; these read AAATSKTKAASGASTA, QSSGSTTSTASTPAD, and VVSQSQPGSRSSSPG. The segment covering 711–721 has biased composition (polar residues); sequence QGCSRETSPSR. Residues 785–796 show a composition bias toward low complexity; it reads SDASSACSERSY. An HEAT 5 repeat occupies 930-967; the sequence is QQFNILMRFIVDQTQTPNLKVKVAILKYIESLARQMDP. Disordered stretches follow at residues 1037-1080 and 1121-1147; these read LKNS…GLSP and VRRDGKKESEMGSCDAGMASPASDLRG. Low complexity predominate over residues 1038–1050; that stretch reads KNSSNSSMGSPSN. Polar residues predominate over residues 1062-1074; the sequence is SRASPLTSPTNCS. Positions 1121-1130 are enriched in basic and acidic residues; that stretch reads VRRDGKKESE. HEAT repeat units follow at residues 1260 to 1297 and 1378 to 1415; these read EHFKTILLLLLETLGDKDHAIRALALRVLREILRNQPA and QILPDIIPGLLQGYDNTESSVRKASVFCLVAVYSVIGE.

This sequence belongs to the CLASP family. Interacts (via C-terminus) with clip1/clip-170, and cenpe.

The protein localises to the cytoplasm. Its subcellular location is the cytoskeleton. It localises to the microtubule organizing center. It is found in the centrosome. The protein resides in the chromosome. The protein localises to the centromere. Its subcellular location is the kinetochore. It localises to the spindle. It is found in the golgi apparatus. The protein resides in the trans-Golgi network. Microtubule plus-end tracking protein that promotes the stabilization of dynamic microtubules during anaphase. Plays a crucial role in chromatin-induced microtubule formation. May also act at microtubule minus ends. May be involved in the nucleation of noncentrosomal microtubules originating from the trans-Golgi network (TGN). The protein is CLIP-associating protein 1-B of Xenopus laevis (African clawed frog).